The primary structure comprises 211 residues: Large ribosomal subunit protein uL4 (211 aa).

Disordered regions lie at residues 1–28 (MAQAQVFDARTGRRSEMELKGPRFETEP) and 48–99 (TAST…GPRY). A compositionally biased stretch (basic and acidic residues) spans 10–28 (RTGRRSEMELKGPRFETEP).

This sequence belongs to the universal ribosomal protein uL4 family. As to quaternary structure, part of the 50S ribosomal subunit.

In terms of biological role, one of the primary rRNA binding proteins, this protein initially binds near the 5'-end of the 23S rRNA. It is important during the early stages of 50S assembly. It makes multiple contacts with different domains of the 23S rRNA in the assembled 50S subunit and ribosome. Its function is as follows. Forms part of the polypeptide exit tunnel. The chain is Large ribosomal subunit protein uL4 from Rubrobacter xylanophilus (strain DSM 9941 / JCM 11954 / NBRC 16129 / PRD-1).